The chain runs to 296 residues: Phosphoribosylaminoimidazole-succinocarboxamide synthase (296 aa).

The protein belongs to the SAICAR synthetase family.

It catalyses the reaction 5-amino-1-(5-phospho-D-ribosyl)imidazole-4-carboxylate + L-aspartate + ATP = (2S)-2-[5-amino-1-(5-phospho-beta-D-ribosyl)imidazole-4-carboxamido]succinate + ADP + phosphate + 2 H(+). The protein operates within purine metabolism; IMP biosynthesis via de novo pathway; 5-amino-1-(5-phospho-D-ribosyl)imidazole-4-carboxamide from 5-amino-1-(5-phospho-D-ribosyl)imidazole-4-carboxylate: step 1/2. This chain is Phosphoribosylaminoimidazole-succinocarboxamide synthase, found in Geobacter sulfurreducens (strain ATCC 51573 / DSM 12127 / PCA).